A 460-amino-acid chain; its full sequence is Dynactin subunit 4 (460 aa).

N-acetylalanine is present on alanine 2. The stretch at 152 to 172 (QQLAQKEKVERDRKKLARRRN) forms a coiled coil. A Phosphoserine modification is found at serine 196. Residue lysine 215 forms a Glycyl lysine isopeptide (Lys-Gly) (interchain with G-Cter in SUMO2) linkage. Threonine 407 is modified (phosphothreonine).

It belongs to the dynactin subunit 4 family. Subunit of dynactin, a multiprotein complex part of a tripartite complex with dynein and a adapter, such as BICDL1, BICD2 or HOOK3. The dynactin complex is built around ACTR1A/ACTB filament and consists of an actin-related filament composed of a shoulder domain, a pointed end and a barbed end. Its length is defined by its flexible shoulder domain. The soulder is composed of 2 DCTN1 subunits, 4 DCTN2 and 2 DCTN3. The 4 DCNT2 (via N-terminus) bind the ACTR1A filament and act as molecular rulers to determine the length. The pointed end is important for binding dynein-dynactin cargo adapters. Consists of 4 subunits: ACTR10, DCNT4, DCTN5 and DCTN6. The barbed end is composed of a CAPZA1:CAPZB heterodimers, which binds ACTR1A/ACTB filament and dynactin and stabilizes dynactin. Interacts with ATP7B, but not ATP7A, in a copper-dependent manner. Interacts with ANK2; this interaction is required for localization at costameres. Interacts with N4BP2L1.

It localises to the cytoplasm. It is found in the cytoskeleton. The protein localises to the microtubule organizing center. Its subcellular location is the centrosome. The protein resides in the stress fiber. It localises to the cell cortex. It is found in the myofibril. The protein localises to the sarcomere. In terms of biological role, part of the dynactin complex that activates the molecular motor dynein for ultra-processive transport along microtubules. The polypeptide is Dynactin subunit 4 (Homo sapiens (Human)).